We begin with the raw amino-acid sequence, 58 residues long: ISEVKMDAEFRHDSGYEVHHQKLVFFAEDVGSNKGAIIGLMVGGVVIATVIVITLVML.

At 1–34 the chain is on the extracellular side; that stretch reads ISEVKMDAEFRHDSGYEVHHQKLVFFAEDVGSNK. Residues His-12, Tyr-16, His-19, and His-20 each contribute to the Cu(2+) site. His-12, Tyr-16, His-19, and His-20 together coordinate Zn(2+). A helical membrane pass occupies residues 35–58; that stretch reads GAIIGLMVGGVVIATVIVITLVML.

It belongs to the APP family. As to quaternary structure, binds, via its C-terminus, to the PID domain of several cytoplasmic proteins, including APBB family members, the APBA family, MAPK8IP1, SHC1 and NUMB and DAB1. Binding to DAB1 inhibits its serine phosphorylation. Interacts (via NPXY motif) with DAB2 (via PID domain); the interaction is impaired by tyrosine phosphorylation of the NPXY motif. Also interacts with GPCR-like protein BPP, APPBP1, IB1, KNS2 (via its TPR domains), APPBP2 (via BaSS) and DDB1. In vitro, it binds MAPT via the MT-binding domains. Associates with microtubules in the presence of ATP and in a kinesin-dependent manner. Interacts, through a C-terminal domain, with GNAO1. Interacts with CPEB1, ANKS1B and AGER. Interacts with ITM2B. Interacts with ITM2C. Interacts with IDE. Can form homodimers; dimerization is enhanced in the presence of Cu(2+) ions. Can form homodimers; this is promoted by heparin binding. Interacts with SORL1 (via N-terminal ectodomain); this interaction retains APP in the trans-Golgi network and reduces processing into soluble APP-alpha and amyloid-beta peptides. Interacts with PLD3. Interacts with VDAC1. Interacts with NSG1; could regulate APP processing. Amyloid-beta protein 42 interacts with FPR2. Interacts with LRRK2. Interacts (via cytoplasmic domain) with KIF5B. Interacts (via C-terminus) with APBB2/FE65L1 (via C-terminus). Interacts (via intracellular domain) with APBB3. In terms of processing, proteolytically processed under normal cellular conditions. Cleavage either by alpha-secretase, beta-secretase or theta-secretase leads to generation and extracellular release of soluble APP peptides, S-APP-alpha and S-APP-beta, and the retention of corresponding membrane-anchored C-terminal fragments, C80, C83 and C99. Subsequent processing of C80 and C83 by gamma-secretase yields P3 peptides. This is the major secretory pathway and is non-amyloidogenic. Alternatively, presenilin/nicastrin-mediated gamma-secretase processing of C99 releases the amyloid-beta proteins, amyloid-beta protein 40 and amyloid-beta protein 42, major components of amyloid plaques, and the cytotoxic C-terminal fragments, gamma-CTF(50), gamma-CTF(57) and gamma-CTF(59). PSEN1 cleavage is more efficient with C83 than with C99 as substrate (in vitro). Amyloid-beta protein 40 and Amyloid-beta protein 42 are cleaved by ACE. Many other minor amyloid-beta peptides, amyloid-beta 1-X peptides, are found in cerebral spinal fluid (CSF) including the amyloid-beta X-15 peptides, produced from the cleavage by alpha-secretase.

The protein resides in the cell membrane. It localises to the membrane. Its subcellular location is the perikaryon. It is found in the cell projection. The protein localises to the growth cone. The protein resides in the clathrin-coated pit. It localises to the early endosome. Its subcellular location is the cytoplasmic vesicle. It is found in the secreted. The protein localises to the cell surface. The protein resides in the nucleus. It localises to the cytoplasm. Functionally, functions as a cell surface receptor and performs physiological functions on the surface of neurons relevant to neurite growth, neuronal adhesion and axonogenesis. Interaction between APP molecules on neighboring cells promotes synaptogenesis. Involved in cell mobility and transcription regulation through protein-protein interactions. Can promote transcription activation through binding to APBB1-KAT5 and inhibit Notch signaling through interaction with Numb. Couples to apoptosis-inducing pathways such as those mediated by G(o) and JIP. Inhibits G(o)-alpha ATPase activity. Acts as a kinesin I membrane receptor, mediating the axonal transport of beta-secretase and presenilin 1. By acting as a kinesin I membrane receptor, plays a role in axonal anterograde transport of cargo towards synapses in axons. May be involved in copper homeostasis/oxidative stress through copper ion reduction. In vitro, copper-metallated APP induces neuronal death directly or is potentiated through Cu(2+)-mediated low-density lipoprotein oxidation. Can regulate neurite outgrowth through binding to components of the extracellular matrix such as heparin and collagen I and IV. Induces a AGER-dependent pathway that involves activation of p38 MAPK, resulting in internalization of amyloid-beta peptide and mitochondrial dysfunction in cultured cortical neurons. Provides Cu(2+) ions for GPC1 which are required for release of nitric oxide (NO) and subsequent degradation of the heparan sulfate chains on GPC1. The chain is Amyloid-beta precursor protein (APP) from Canis lupus familiaris (Dog).